The sequence spans 415 residues: Esterase FrsA (415 aa).

Belongs to the FrsA family. In terms of assembly, monomer in solution. Homodimer. Forms a 1:1 complex with the unphosphorylated form of the EIIA component of the glucose-specific PTS system (IIAGlc).

It catalyses the reaction a carboxylic ester + H2O = an alcohol + a carboxylate + H(+). Its function is as follows. Catalyzes the hydrolysis of esters. In vitro, prefers short chain alkanoate ester as substrate. Displays highest activity towards p-nitrophenyl acetate (pNPA). Has weaker activity towards p-nitrophenyl butyrate (pNPB). In Vibrio vulnificus (strain CMCP6), this protein is Esterase FrsA.